A 113-amino-acid chain; its full sequence is UPF0342 protein SPy_0811/M5005_Spy0626 (113 aa).

Belongs to the UPF0342 family.

The protein is UPF0342 protein SPy_0811/M5005_Spy0626 of Streptococcus pyogenes serotype M1.